Reading from the N-terminus, the 319-residue chain is Acetyl-coenzyme A carboxylase carboxyl transferase subunit alpha (319 aa).

Residues 39–293 (RLQKKSNDLT…KAVLEKQLHE (255 aa)) enclose the CoA carboxyltransferase C-terminal domain.

It belongs to the AccA family. In terms of assembly, acetyl-CoA carboxylase is a heterohexamer composed of biotin carboxyl carrier protein (AccB), biotin carboxylase (AccC) and two subunits each of ACCase subunit alpha (AccA) and ACCase subunit beta (AccD).

It is found in the cytoplasm. It catalyses the reaction N(6)-carboxybiotinyl-L-lysyl-[protein] + acetyl-CoA = N(6)-biotinyl-L-lysyl-[protein] + malonyl-CoA. Its pathway is lipid metabolism; malonyl-CoA biosynthesis; malonyl-CoA from acetyl-CoA: step 1/1. Its function is as follows. Component of the acetyl coenzyme A carboxylase (ACC) complex. First, biotin carboxylase catalyzes the carboxylation of biotin on its carrier protein (BCCP) and then the CO(2) group is transferred by the carboxyltransferase to acetyl-CoA to form malonyl-CoA. The chain is Acetyl-coenzyme A carboxylase carboxyl transferase subunit alpha from Neisseria meningitidis serogroup C (strain 053442).